Consider the following 309-residue polypeptide: ADP-L-glycero-D-manno-heptose-6-epimerase (309 aa).

NADP(+) is bound by residues 10-11, 31-32, K38, K53, 75-79, and N92; these read MI, DN, and EGACS. The active-site Proton acceptor is the Y139. K143 contributes to the NADP(+) binding site. N168 provides a ligand contact to substrate. Residues V169 and K177 each contribute to the NADP(+) site. The Proton acceptor role is filled by K177. Substrate contacts are provided by residues S179, H186, 200–203, R208, and Y271; that span reads FDGS.

The protein belongs to the NAD(P)-dependent epimerase/dehydratase family. HldD subfamily. As to quaternary structure, homopentamer. NADP(+) is required as a cofactor.

It catalyses the reaction ADP-D-glycero-beta-D-manno-heptose = ADP-L-glycero-beta-D-manno-heptose. The protein operates within nucleotide-sugar biosynthesis; ADP-L-glycero-beta-D-manno-heptose biosynthesis; ADP-L-glycero-beta-D-manno-heptose from D-glycero-beta-D-manno-heptose 7-phosphate: step 4/4. Catalyzes the interconversion between ADP-D-glycero-beta-D-manno-heptose and ADP-L-glycero-beta-D-manno-heptose via an epimerization at carbon 6 of the heptose. The chain is ADP-L-glycero-D-manno-heptose-6-epimerase from Serratia proteamaculans (strain 568).